A 70-amino-acid polypeptide reads, in one-letter code: Alpha-elapitoxin-Ast2a (70 aa).

Disulfide bonds link Cys3–Cys20, Cys13–Cys41, Cys26–Cys30, Cys45–Cys56, and Cys57–Cys62. Ser70 bears the Serine amide mark.

This sequence belongs to the three-finger toxin family. Long-chain subfamily. Type II alpha-neurotoxin sub-subfamily. As to expression, expressed by the venom gland.

Its subcellular location is the secreted. Its function is as follows. Binds with high affinity to muscular (alpha-1/CHRNA1) and neuronal (alpha-7/CHRNA7) nicotinic acetylcholine receptor (nAChR) and inhibits acetylcholine from binding to the receptor, thereby impairing neuromuscular and neuronal transmission. This Hydrophis stokesii (Stokes's sea snake) protein is Alpha-elapitoxin-Ast2a.